The primary structure comprises 429 residues: UDP-N-acetylglucosamine 1-carboxyvinyltransferase (429 aa).

A phosphoenolpyruvate-binding site is contributed by K22–N23. Residue R102 coordinates UDP-N-acetyl-alpha-D-glucosamine. Residue C126 is the Proton donor of the active site. A 2-(S-cysteinyl)pyruvic acid O-phosphothioketal modification is found at C126. UDP-N-acetyl-alpha-D-glucosamine-binding positions include R131–L135, D316, and I338.

The protein belongs to the EPSP synthase family. MurA subfamily.

It localises to the cytoplasm. It catalyses the reaction phosphoenolpyruvate + UDP-N-acetyl-alpha-D-glucosamine = UDP-N-acetyl-3-O-(1-carboxyvinyl)-alpha-D-glucosamine + phosphate. It functions in the pathway cell wall biogenesis; peptidoglycan biosynthesis. Its function is as follows. Cell wall formation. Adds enolpyruvyl to UDP-N-acetylglucosamine. This is UDP-N-acetylglucosamine 1-carboxyvinyltransferase from Nitrobacter hamburgensis (strain DSM 10229 / NCIMB 13809 / X14).